A 552-amino-acid chain; its full sequence is Membrane protein insertase YidC (552 aa).

The helical transmembrane segment at 3 to 23 threads the bilayer; the sequence is IKRTVLWVIFFMSAVMLFDNW. The disordered stretch occupies residues 36 to 59; the sequence is SATPTRTVGSAAPGTTTPGTQPAD. Residues 42 to 59 show a composition bias toward low complexity; sequence TVGSAAPGTTTPGTQPAD. Helical transmembrane passes span 364–384, 430–450, and 504–524; these read WGWS…PLSA, FGGC…YWVL, and MMFM…GLVL.

The protein belongs to the OXA1/ALB3/YidC family. Type 1 subfamily. As to quaternary structure, interacts with the Sec translocase complex via SecD. Specifically interacts with transmembrane segments of nascent integral membrane proteins during membrane integration.

It is found in the cell inner membrane. Its function is as follows. Required for the insertion and/or proper folding and/or complex formation of integral membrane proteins into the membrane. Involved in integration of membrane proteins that insert both dependently and independently of the Sec translocase complex, as well as at least some lipoproteins. Aids folding of multispanning membrane proteins. This Paraburkholderia xenovorans (strain LB400) protein is Membrane protein insertase YidC.